We begin with the raw amino-acid sequence, 1235 residues long: ATP-dependent helicase/nuclease subunit A (1235 aa).

The UvrD-like helicase ATP-binding domain maps to 12–482; sequence TLWTDDQWKA…IDLSQNFRSR (471 aa). 33–40 contributes to the ATP binding site; sequence AAAGSGKT. One can recognise a UvrD-like helicase C-terminal domain in the interval 509–800; sequence AAELTLGANF…RMMTIHASKG (292 aa).

Belongs to the helicase family. AddA subfamily. In terms of assembly, heterodimer of AddA and AddB/RexB. Mg(2+) serves as cofactor.

The catalysed reaction is Couples ATP hydrolysis with the unwinding of duplex DNA by translocating in the 3'-5' direction.. The enzyme catalyses ATP + H2O = ADP + phosphate + H(+). The heterodimer acts as both an ATP-dependent DNA helicase and an ATP-dependent, dual-direction single-stranded exonuclease. Recognizes the chi site generating a DNA molecule suitable for the initiation of homologous recombination. The AddA nuclease domain is required for chi fragment generation; this subunit has the helicase and 3' -&gt; 5' nuclease activities. The polypeptide is ATP-dependent helicase/nuclease subunit A (Listeria welshimeri serovar 6b (strain ATCC 35897 / DSM 20650 / CCUG 15529 / CIP 8149 / NCTC 11857 / SLCC 5334 / V8)).